The following is a 98-amino-acid chain: UPF0235 protein MJ0618 (98 aa).

This sequence belongs to the UPF0235 family.

The protein is UPF0235 protein MJ0618 of Methanocaldococcus jannaschii (strain ATCC 43067 / DSM 2661 / JAL-1 / JCM 10045 / NBRC 100440) (Methanococcus jannaschii).